The chain runs to 137 residues: Protein LTO1 homolog (137 aa).

Alanine 2 is subject to N-acetylalanine. Position 4 is a phosphoserine (serine 4). The deca-GX3 motif; required for interaction with YAE1 and the CIA complex stretch occupies residues 22–58; sequence GYREGYEEGSSLGVMEGRQHGTLHGAKIGSEIGCYQG.

This sequence belongs to the LTO1 family. Forms a complex with YAE1. Interacts with PYCR1 and PYCR2. Widely expressed. Highly expressed in placenta, kidney and skeletal muscle.

It is found in the nucleus. Its function is as follows. The complex LTO1:YAE1 functions as a target specific adapter that probably recruits apo-ABCE1 to the cytosolic iron-sulfur protein assembly (CIA) complex machinery. May be required for biogenesis of the large ribosomal subunit and initiation of translation. May play a role in the regulation of proline metabolism and ROS production. The protein is Protein LTO1 homolog of Homo sapiens (Human).